The sequence spans 88 residues: Large ribosomal subunit protein bL31B (88 aa).

It belongs to the bacterial ribosomal protein bL31 family. Type B subfamily. Part of the 50S ribosomal subunit.

This Bordetella bronchiseptica (strain ATCC BAA-588 / NCTC 13252 / RB50) (Alcaligenes bronchisepticus) protein is Large ribosomal subunit protein bL31B.